Here is a 485-residue protein sequence, read N- to C-terminus: Delta(14)-sterol reductase (485 aa).

The next 5 membrane-spanning stretches (helical) occupy residues 18-38 (FFGPPGAFAISFLLPVLVYVF), 77-97 (GLVSWEASAATAGYILLSLIL), 131-151 (LAILAAGTAAQGAEFPVWTFI), 155-175 (FIQILTANTIFSYAVATFVYV), and 319-339 (SLGPVGLAVMLSLIGLGFYIF). NADP(+) is bound by residues Lys346, Arg350, Leu373, Trp378, and 385-386 (NY). The chain crosses the membrane as a helical span at residues 431–451 (AKGWGMLITYFYILYFAILLI). NADP(+) contacts are provided by residues Asp457, 461–465 (CHRKY), and Tyr472.

The protein belongs to the ERG4/ERG24 family.

The protein localises to the membrane. It catalyses the reaction 4,4-dimethyl-5alpha-cholesta-8,24-dien-3beta-ol + NADP(+) = 4,4-dimethyl-5alpha-cholesta-8,14,24-trien-3beta-ol + NADPH + H(+). It participates in steroid biosynthesis; zymosterol biosynthesis; zymosterol from lanosterol: step 2/6. Functionally, reduces the C14=C15 double bond of 4,4-dimethyl-cholesta-8,14,24-trienol to produce 4,4-dimethyl-cholesta-8,24-dienol. This Fusarium vanettenii (Neocosmospora pisi) protein is Delta(14)-sterol reductase.